The sequence spans 423 residues: AP-1 complex subunit mu-1 (423 aa).

Ser2 carries the N-acetylserine modification. Phosphothreonine is present on residues Thr152, Thr154, and Thr223. The region spanning 168-421 (KNEVFLDVIE…ITQNGDYQLR (254 aa)) is the MHD domain.

It belongs to the adaptor complexes medium subunit family. In terms of assembly, adaptor protein complex 1 (AP-1) is a heterotetramer composed of two large adaptins (gamma-type subunit AP1G1 and beta-type subunit AP1B1), a medium adaptin (mu-type subunit AP1M1 or AP1M2) and a small adaptin (sigma-type subunit AP1S1 or AP1S2 or AP1S3). Interacts with MARCHF11. Phosphorylation of membrane-bound AP1M1/AP1M2 increases its affinity for sorting signals.

It localises to the cytoplasmic vesicle. Its subcellular location is the clathrin-coated vesicle membrane. It is found in the golgi apparatus. Functionally, subunit of clathrin-associated adaptor protein complex 1 that plays a role in protein sorting in the trans-Golgi network (TGN) and endosomes. The AP complexes mediate the recruitment of clathrin to membranes and the recognition of sorting signals within the cytosolic tails of transmembrane cargo molecules. This chain is AP-1 complex subunit mu-1, found in Bos taurus (Bovine).